Consider the following 168-residue polypeptide: Group IIF secretory phospholipase A2 (168 aa).

Residues 1 to 20 (MKKFFTVAILAGSVLSTAHG) form the signal peptide. 7 disulfides stabilise this stretch: cysteine 46–cysteine 138, cysteine 48–cysteine 64, cysteine 63–cysteine 120, cysteine 69–cysteine 145, cysteine 70–cysteine 113, cysteine 79–cysteine 106, and cysteine 98–cysteine 111. Ca(2+) contacts are provided by tyrosine 47, glycine 49, and glycine 51. The active site involves histidine 67. Aspartate 68 contributes to the Ca(2+) binding site. N-linked (GlcNAc...) asparagine glycans are attached at residues asparagine 92 and asparagine 102. Aspartate 114 is an active-site residue. 2 N-linked (GlcNAc...) asparagine glycosylation sites follow: asparagine 123 and asparagine 144. The interval 139-168 (QGPTPNCSIYEPPPEEVTCSHQSPAPPAPP) is required for localization on the plasma membrane.

This sequence belongs to the phospholipase A2 family. Ca(2+) serves as cofactor. In terms of tissue distribution, expressed at high levels in placenta, testis, thymus and at lower levels in heart, kidney, liver and prostate. Highly expressed in rheumatoid arthritic tissues, including synovial lining cells in the intima, capillary endothelial cells and plasma cells.

The protein resides in the secreted. It is found in the cell membrane. It carries out the reaction a 1,2-diacyl-sn-glycero-3-phosphocholine + H2O = a 1-acyl-sn-glycero-3-phosphocholine + a fatty acid + H(+). It catalyses the reaction 1-hexadecanoyl-2-(9Z-octadecenoyl)-sn-glycero-3-phospho-(1'-sn-glycerol) + H2O = 1-hexadecanoyl-sn-glycero-3-phospho-(1'-sn-glycerol) + (9Z)-octadecenoate + H(+). The enzyme catalyses 1-hexadecanoyl-2-(9Z,12Z-octadecadienoyl)-sn-glycero-3-phosphoethanolamine + H2O = 1-hexadecanoyl-sn-glycero-3-phosphoethanolamine + (9Z,12Z)-octadecadienoate + H(+). The catalysed reaction is 1-hexadecanoyl-2-(5Z,8Z,11Z,14Z-eicosatetraenoyl)-sn-glycero-3-phosphoethanolamine + H2O = 1-hexadecanoyl-sn-glycero-3-phosphoethanolamine + (5Z,8Z,11Z,14Z)-eicosatetraenoate + H(+). It carries out the reaction 1-hexadecanoyl-2-(9Z-octadecenoyl)-sn-glycero-3-phosphocholine + H2O = 1-hexadecanoyl-sn-glycero-3-phosphocholine + (9Z)-octadecenoate + H(+). It catalyses the reaction 1-hexadecanoyl-2-(9Z-octadecenoyl)-sn-glycero-3-phospho-L-serine + H2O = 1-hexadecanoyl-sn-glycero-3-phospho-L-serine + (9Z)-octadecenoate + H(+). Its function is as follows. Secretory calcium-dependent phospholipase A2 that primarily targets extracellular phospholipids. Hydrolyzes the ester bond of the fatty acyl group attached at the sn-2 position of phospholipids (phospholipase A2 activity), the catalytic efficiency decreasing in the following order: phosphatidylglycerols &gt; phosphatidylethanolamines &gt; phosphatidylcholines &gt; phosphatidylserines. May play a role in lipid mediator production in inflammatory conditions, by providing arachidonic acid to downstream cyclooxygenases and lipoxygenases. This chain is Group IIF secretory phospholipase A2 (PLA2G2F), found in Homo sapiens (Human).